The primary structure comprises 250 residues: 3-deoxy-manno-octulosonate cytidylyltransferase 1 (250 aa).

This sequence belongs to the KdsB family.

Its subcellular location is the cytoplasm. It carries out the reaction 3-deoxy-alpha-D-manno-oct-2-ulosonate + CTP = CMP-3-deoxy-beta-D-manno-octulosonate + diphosphate. It functions in the pathway nucleotide-sugar biosynthesis; CMP-3-deoxy-D-manno-octulosonate biosynthesis; CMP-3-deoxy-D-manno-octulosonate from 3-deoxy-D-manno-octulosonate and CTP: step 1/1. It participates in bacterial outer membrane biogenesis; lipopolysaccharide biosynthesis. Functionally, activates KDO (a required 8-carbon sugar) for incorporation into bacterial lipopolysaccharide in Gram-negative bacteria. This is 3-deoxy-manno-octulosonate cytidylyltransferase 1 from Actinobacillus pleuropneumoniae serotype 5b (strain L20).